Here is a 615-residue protein sequence, read N- to C-terminus: Dehydrogenase str4 (615 aa).

FAD is bound by residues 45–46 (TA), 66–67 (EA), and 123–126 (NGSM). The active-site Proton acceptor is the histidine 552. FAD is bound by residues alanine 585 and 596–597 (PA).

Belongs to the GMC oxidoreductase family. In terms of assembly, homodimer. FAD serves as cofactor.

The protein operates within mycotoxin biosynthesis. In terms of biological role, dehydrogenase; part of the gene cluster that mediates the biosynthesis of strobilurin A, an antifungal polyketide that contains a key beta-methoxyacrylate toxophore that targets the complex III of the mitochondrial electron transport chain. Strobilurin biosynthesis begins with construction of benzoyl CoA by step-wise elimination of ammonia from phenylalanine by the phenylalanine ammonia-lyase str11, oxygenation by str8 and retro-Claisen reaction to form benzoic acid, which is activated to its CoA thiolester benzoyl CoA by the dedicated CoA ligase str10. Benzoyl CoA forms the starter unit for the highly reducing polyketide synthase stpks1 that produces the polyketide prestrobilutin A. The FAD-dependent oxygenase str9 then catalyzes the key oxidative rearrangement responsible for the creation of the beta-methoxyacrylate toxophore. Str9 performs epoxidation of the 2,3 olefin of prestrobilutin A, followed by Meinwald rearrangement to furnish the aldehyde intermediate. Rapid enolization of the aldehyde intermediate would give the beta-methoxyacrylate skeleton and methylations catalyzed by str2 and str3 complete the synthesis and lead to the production of strobilurin A. The short-chain dehydrogenase stl2 and the dehydrogenase str4 play a role in the shunt pathway leading to the production of bolineol. The cluster encodes no obvious halogenase gene that could be involved in production of strobilurin B, nor any obvious dimethylallyl-transferase that could be involved in the production of strobilurin G. It is possible that unknown proteins encoded in, or near, the cluster (such as str1 or stl1) may form new classes of halogenases or dimethylally-transferases, or that the responsible genes are located elsewhere on the genome. Similarly, proteins encoded by str5/str6 hydrolases appear to have no chemical role in the biosynthesis of strobilurin A. Finally, no obvious self-resistance gene is found within the cluster. This Strobilurus tenacellus protein is Dehydrogenase str4.